The chain runs to 850 residues: RPA-related protein RADX (850 aa).

The tract at residues Met1 to Gly31 is disordered. Residues Trp228–Asn331 constitute a DNA-binding region (OB). Disordered stretches follow at residues Glu575 to Gln612 and Gly632 to Arg671. Basic and acidic residues predominate over residues Gly590–Pro608. The segment covering Pro643–Gly668 has biased composition (polar residues).

It is found in the chromosome. Its function is as follows. Single-stranded DNA-binding protein recruited to replication forks to maintain genome stability. Prevents fork collapse by antagonizing the accumulation of RAD51 at forks to ensure the proper balance of fork remodeling and protection without interfering with the capacity of cells to complete homologous recombination of double-strand breaks. The chain is RPA-related protein RADX from Mus musculus (Mouse).